The following is a 64-amino-acid chain: Prokaryotic ubiquitin-like protein Pup (64 aa).

The segment at 1–36 is disordered; the sequence is MAQEQTKRGGGGGDDEDVTGTTAAGQERRKKLAQDT. Residues 21–58 are ARC ATPase binding; it reads TTAAGQERRKKLAQDTDDLLDEIDDVLEENAEDFVRAY. The stretch at 26-52 forms a coiled coil; that stretch reads QERRKKLAQDTDDLLDEIDDVLEENAE. Glutamine 64 carries the deamidated glutamine modification. An Isoglutamyl lysine isopeptide (Gln-Lys) (interchain with K-? in acceptor proteins) cross-link involves residue glutamine 64.

Belongs to the prokaryotic ubiquitin-like protein family. As to quaternary structure, strongly interacts with the proteasome-associated ATPase ARC through a hydrophobic interface; the interacting region of Pup lies in its C-terminal half. There is one Pup binding site per ARC hexamer ring. Is modified by deamidation of its C-terminal glutamine to glutamate by the deamidase Dop, a prerequisite to the subsequent pupylation process.

It functions in the pathway protein degradation; proteasomal Pup-dependent pathway. Its function is as follows. Protein modifier that is covalently attached to lysine residues of substrate proteins, thereby targeting them for proteasomal degradation. The tagging system is termed pupylation. This is Prokaryotic ubiquitin-like protein Pup from Mycobacterium ulcerans (strain Agy99).